The sequence spans 165 residues: Ureidoglycolate lyase (165 aa).

Belongs to the ureidoglycolate lyase family. As to quaternary structure, homodimer. Ni(2+) is required as a cofactor.

The catalysed reaction is (S)-ureidoglycolate = urea + glyoxylate. The protein operates within nitrogen metabolism; (S)-allantoin degradation. Functionally, catalyzes the catabolism of the allantoin degradation intermediate (S)-ureidoglycolate, generating urea and glyoxylate. Involved in the utilization of allantoin as nitrogen source. The sequence is that of Ureidoglycolate lyase from Chelativorans sp. (strain BNC1).